A 366-amino-acid chain; its full sequence is MMKASRSDTFMLRTWIQLLVLFVIMFIMSAILPIAASVEGLGFPCYFPNLVDYSLLNLTLRNAAKHLTPTLFLEAPELFVYITWSVLVDLASAIYYVVGALAILQARKTHLTSMITLQTWINLVGSHTMLFIGIARMWTLQLFIHVLSYKHVMLAAFIYFLHFCLSYMHTLSLVSRNSPKWSVLLMEQHIPKQSLLSTILDYGKPLCVNMYLSLLALEMLVFSLGFMMAIGNSFYILVSDTVLASINLYFVLTTFWYMMTEMFLQDYLKLQFGFYLGVFSGSLILLLPVLRYEAVFVSANLHKTVAVNIAMIPAMCVIAMMFRLFRYSQQVRKPENSYTPLPKRFKKRRQKQDQQLIMVETSDEEL.

Residues 1–17 (MMKASRSDTFMLRTWIQ) are Intravirion-facing. Residues 18–38 (LLVLFVIMFIMSAILPIAASV) form a helical membrane-spanning segment. Residues 39–83 (EGLGFPCYFPNLVDYSLLNLTLRNAAKHLTPTLFLEAPELFVYIT) lie on the Virion surface side of the membrane. A helical transmembrane segment spans residues 84 to 104 (WSVLVDLASAIYYVVGALAIL). Over 105 to 113 (QARKTHLTS) the chain is Intravirion. Residues 114–134 (MITLQTWINLVGSHTMLFIGI) traverse the membrane as a helical segment. The Virion surface segment spans residues 135 to 153 (ARMWTLQLFIHVLSYKHVM). The helical transmembrane segment at 154-174 (LAAFIYFLHFCLSYMHTLSLV) threads the bilayer. Topologically, residues 175–209 (SRNSPKWSVLLMEQHIPKQSLLSTILDYGKPLCVN) are intravirion. Residues 210-230 (MYLSLLALEMLVFSLGFMMAI) traverse the membrane as a helical segment. Over 231 to 235 (GNSFY) the chain is Virion surface. Residues 236-256 (ILVSDTVLASINLYFVLTTFW) form a helical membrane-spanning segment. The Intravirion portion of the chain corresponds to 257–269 (YMMTEMFLQDYLK). A helical membrane pass occupies residues 270 to 290 (LQFGFYLGVFSGSLILLLPVL). At 291–304 (RYEAVFVSANLHKT) the chain is on the virion surface side. Residues 305 to 325 (VAVNIAMIPAMCVIAMMFRLF) form a helical membrane-spanning segment. The Intravirion portion of the chain corresponds to 326 to 366 (RYSQQVRKPENSYTPLPKRFKKRRQKQDQQLIMVETSDEEL).

It belongs to the herpesviridae glycoprotein M family. Interacts (via N-terminus) with gN (via N-terminus). The gM-gN heterodimer forms the gCII complex.

The protein resides in the virion membrane. It is found in the host Golgi apparatus. The protein localises to the host trans-Golgi network. Its subcellular location is the host endosome membrane. It localises to the host nucleus inner membrane. Envelope glycoprotein important for virion assembly and egress. Plays a role in the correct incorporation of gH-gL into virion membrane. Directs the glycoprotein N (gN) to the host trans-Golgi network. The polypeptide is Envelope glycoprotein M (Saimiri sciureus (Common squirrel monkey)).